The primary structure comprises 649 residues: Cysteine-rich receptor-like protein kinase 2 (649 aa).

Residues 1 to 29 (MKKEPVHILPLYLPCLLMFLLSSLRQITG) form the signal peptide. Topologically, residues 30–258 (DARARAVKVT…IPRNGRSRGS (229 aa)) are extracellular. Gnk2-homologous domains lie at 33–134 (ARAV…NYSF) and 139–245 (KGPE…DQDF). N47, N131, N149, N154, and N214 each carry an N-linked (GlcNAc...) asparagine glycan. A helical transmembrane segment spans residues 259-279 (VVVIVVSVLSSVVVFMIGVAV). Residues 280-649 (SVYICKRRTI…TVSQSSFYGR (370 aa)) lie on the Cytoplasmic side of the membrane. The 284-residue stretch at 325–608 (FDNANKLGQG…HMLKNKEEVL (284 aa)) folds into the Protein kinase domain. ATP is bound by residues 331–339 (LGQGGFGTV) and K353. At Y398 the chain carries Phosphotyrosine. The Proton acceptor role is filled by D450. S454 and S483 each carry phosphoserine. Phosphothreonine is present on residues T484 and T489. The residue at position 497 (Y497) is a Phosphotyrosine.

The protein belongs to the protein kinase superfamily. Ser/Thr protein kinase family. CRK subfamily.

It is found in the membrane. The enzyme catalyses L-seryl-[protein] + ATP = O-phospho-L-seryl-[protein] + ADP + H(+). It catalyses the reaction L-threonyl-[protein] + ATP = O-phospho-L-threonyl-[protein] + ADP + H(+). In Arabidopsis thaliana (Mouse-ear cress), this protein is Cysteine-rich receptor-like protein kinase 2 (CRK2).